The primary structure comprises 426 residues: Tyrosine-protein phosphatase non-receptor type 20 (426 aa).

The segment covering 1–10 has biased composition (basic residues); that stretch reads MSSPRKVRGK. The tract at residues 1–58 is disordered; the sequence is MSSPRKVRGKTGRDNDEEEGNSGNLNLRNSLPSSSQKMTPTKPIFGNKMNSENVKPSH. Positions 21–35 are enriched in low complexity; the sequence is NSGNLNLRNSLPSSS. Ser76 carries the post-translational modification Phosphoserine. Residues 95-117 are compositionally biased toward polar residues; it reads NSMDSETAGPSKTVSPVLSGSSR. The disordered stretch occupies residues 95–124; the sequence is NSMDSETAGPSKTVSPVLSGSSRLSKDTET. Residue Ser127 is modified to Phosphoserine. The 254-residue stretch at 165–418 folds into the Tyrosine-protein phosphatase domain; that stretch reads IIREFLELEQ…QFCYEIVLEV (254 aa). Substrate contacts are provided by residues Asp329, 359–365, and Gln403; that span reads CSAGVGR. The active-site Phosphocysteine intermediate is the Cys359.

The protein belongs to the protein-tyrosine phosphatase family. Non-receptor class subfamily. Testis-specific. Specifically expressed in testicular germ cells that undergo meiosis (at protein level).

It is found in the nucleus. Its subcellular location is the cytoplasm. The protein resides in the cytoskeleton. It localises to the microtubule organizing center. The protein localises to the centrosome. It carries out the reaction O-phospho-L-tyrosyl-[protein] + H2O = L-tyrosyl-[protein] + phosphate. In terms of biological role, tyrosine-protein phosphatase targeted to sites of actin polymerization in response of varied extracellular stimuli. Has tyrosine phosphatase activity towards various tyrosyl phosphorylated substrates. The protein is Tyrosine-protein phosphatase non-receptor type 20 (Ptpn20) of Mus musculus (Mouse).